A 131-amino-acid chain; its full sequence is Leptin receptor overlapping transcript-like 1 (131 aa).

4 helical membrane passes run L7–L27, K32–A52, L69–A89, and A100–F120.

The protein belongs to the OB-RGRP/VPS55 family. In terms of assembly, interacts with RAB13. In terms of tissue distribution, widely expressed, with highest expression in heart, testis, adrenal gland, thymus, and spleen, and lowest expression in lung and skeletal muscle.

Its subcellular location is the membrane. Negatively regulates growth hormone (GH) receptor cell surface expression in liver. May play a role in liver resistance to GH during periods of reduced nutrient availability. The protein is Leptin receptor overlapping transcript-like 1 (LEPROTL1) of Homo sapiens (Human).